We begin with the raw amino-acid sequence, 140 residues long: Nucleoside diphosphate kinase (140 aa).

Residues Lys-11, Phe-59, Arg-87, Thr-93, Arg-104, and Asn-114 each contribute to the ATP site. The active-site Pros-phosphohistidine intermediate is His-117.

It belongs to the NDK family. Homotetramer. Mg(2+) is required as a cofactor.

The protein resides in the cytoplasm. It catalyses the reaction a 2'-deoxyribonucleoside 5'-diphosphate + ATP = a 2'-deoxyribonucleoside 5'-triphosphate + ADP. The catalysed reaction is a ribonucleoside 5'-diphosphate + ATP = a ribonucleoside 5'-triphosphate + ADP. Functionally, major role in the synthesis of nucleoside triphosphates other than ATP. The ATP gamma phosphate is transferred to the NDP beta phosphate via a ping-pong mechanism, using a phosphorylated active-site intermediate. In Methylobacterium radiotolerans (strain ATCC 27329 / DSM 1819 / JCM 2831 / NBRC 15690 / NCIMB 10815 / 0-1), this protein is Nucleoside diphosphate kinase.